The sequence spans 372 residues: Pristinol synthase (372 aa).

Residues 1 to 12 (MAHETTSGRRLP) are compositionally biased toward basic and acidic residues. Residues 1–23 (MAHETTSGRRLPDPTSPSDPTRR) are disordered. Mg(2+) is bound by residues D100 and D104. A DDXXD motif motif is present at residues 100–104 (DDQFD). Residue R197 coordinates substrate. Mg(2+) contacts are provided by N243 and S247. K250 contacts substrate. Position 251 (E251) interacts with Mg(2+). Substrate is bound at residue 337–338 (RY). The interval 349–372 (GRRRPWDGLTTATGTASPRHPRRA) is disordered.

The protein belongs to the terpene synthase family. Requires Mg(2+) as cofactor.

It carries out the reaction (2E,6E)-farnesyl diphosphate + H2O = (+)-(2S,3R,9R)-pristinol + diphosphate. The protein operates within secondary metabolite biosynthesis; terpenoid biosynthesis. In terms of biological role, catalyzes the conversion of (2E,6E)-farnesyl diphosphate (FPP) to yield a new 5-8 bicyclic (pristinane) sesquiterpenol (+)-(2S,3R,9R)-pristinol via a 1,11-cyclization, which requires the abstraction of the pyrophosphate from FPP to yield the humulyl cation. The only accepted substrate is farnesyl diphosphate (FPP). This Streptomyces pristinaespiralis (strain ATCC 25486 / DSM 40338 / CBS 914.69 / JCM 4507 / KCC S-0507 / NBRC 13074 / NRRL 2958 / 5647) protein is Pristinol synthase.